We begin with the raw amino-acid sequence, 249 residues long: Secreted flagellin C (249 aa).

Post-translationally, the secreted form is about 1 kDa larger than the whole cell lysate form, presumably due to post-translational modification. A 22 kDa form is also found in the secreted fraction, probably resulting from proteolysis.

The protein resides in the secreted. The protein localises to the host cell surface. Its function is as follows. Plays a role in virulence. In Campylobacter jejuni subsp. jejuni serotype O:2 (strain ATCC 700819 / NCTC 11168), this protein is Secreted flagellin C (flaC).